A 175-amino-acid polypeptide reads, in one-letter code: MFRQEMARYPKKSIKKRRVGRRKYGSKAATSHDYSSSGSILVPENTVKVFRIEPTDKTLPRYFIWKMFMLLVCKVKPGRILHWAMIKSSWEINQPTTCLEAPGLFIKPEHSHLVKLVCSGELEAGVATGTSDVECLLRKTTVLRKNVTEVDYLYLAFYCSSGVSINYQNRITYHV.

The tract at residues 1 to 35 (MFRQEMARYPKKSIKKRRVGRRKYGSKAATSHDYS) is disordered. Basic residues predominate over residues 9–25 (YPKKSIKKRRVGRRKYG).

Belongs to the nanoviridae capsid protein family.

It localises to the virion. The protein is Capsid protein (DNA-S) of Musa (BBTV).